A 650-amino-acid chain; its full sequence is Rab proteins geranylgeranyltransferase component A 1 (650 aa).

Disordered stretches follow at residues 156–208 (IPAE…ETPK) and 603–650 (PAPP…EPSE). Positions 177 to 190 (ATGKKENSDAKSST) are enriched in basic and acidic residues. Over residues 616 to 634 (DSSQQEVPESSVTPETNSE) the composition is skewed to polar residues.

It belongs to the Rab GDI family. In terms of assembly, monomer. Heterotrimer composed of RABGGTA, RABGGTB and CHM; within this trimer, RABGGTA and RABGGTB form the catalytic component B, while CHM (component A) mediates Rab protein binding. Can associate with the Rab GGTase dimer (RGGT or component B) prior to Rab protein binding; the association is stabilized by geranylgeranyl pyrophosphate (GGpp). The CHM:RGGT:Rab complex is destabilized by GGpp. Interacts with RAB1A, RAB1B, RAB7A and RAB27A and mediates their prenylation. Interacts with RAB5A. Interacts with the non-phosphorylated forms of RAB3A, RAB3B, RAB3C, RAB3D, RAB5B, RAB5C RAB8A, RAB8B, RAB10, RAB12, RAB35, and RAB43. Most abundant in the heart, brain, and spleen. Lower levels seen in the lung, liver, muscle and kidney. Extremely low levels seen in the testis.

The protein localises to the cytoplasm. It localises to the cytosol. Functionally, substrate-binding subunit of the Rab geranylgeranyltransferase (GGTase) complex. Binds unprenylated Rab proteins and presents the substrate peptide to the catalytic component B composed of RABGGTA and RABGGTB, and remains bound to it after the geranylgeranyl transfer reaction. The component A is thought to be regenerated by transferring its prenylated Rab back to the donor membrane. Besides, a pre-formed complex consisting of CHM and the Rab GGTase dimer (RGGT or component B) can bind to and prenylate Rab proteins; this alternative pathway is proposed to be the predominant pathway for Rab protein geranylgeranylation. This chain is Rab proteins geranylgeranyltransferase component A 1 (Chm), found in Rattus norvegicus (Rat).